A 653-amino-acid polypeptide reads, in one-letter code: Eukaryotic translation initiation factor 4E-binding protein Mextli (653 aa).

The KH domain occupies 227-292 (YCKDEVVIRN…DKINYAKQLM (66 aa)). Disordered regions lie at residues 311-335 (VGGS…TPTG) and 515-570 (EGDD…AGTN). Low complexity-rich tracts occupy residues 314–323 (SCSSLNSSNS) and 525–536 (SNGGSSTSNQNG). The span at 546–563 (SRKESTPETKGAREKGDL) shows a compositional bias: basic and acidic residues.

Interacts with eukaryotic translation initiation factor eIF4E1. Also interacts with eukaryotic translation initiation factor 3 complex members eif3-S9/eif3b, Int6/eif3e and eIF-3p40/eif3h and with CG3225.

The protein resides in the cytoplasm. It is found in the cytoplasmic ribonucleoprotein granule. Its function is as follows. Plays a role in promoting translation. This is Eukaryotic translation initiation factor 4E-binding protein Mextli from Drosophila melanogaster (Fruit fly).